The sequence spans 434 residues: KH domain-containing protein 3 (434 aa).

The tract at residues 1 to 39 is involved in RNA binding; sequence MATLKTFRTLVQLKHKLGKAYEIVGEPRLPKWFHVEYLE. One can recognise a KH; atypical domain in the interval 40–118; that stretch reads DPKKMYVEPT…CRMKLMEKEA (79 aa). Phosphothreonine occurs at positions 267 and 279. Positions 334–434 are required for interaction with NUMA1 and regulation of apoptosis in response to DNA damage; the sequence is VREAATQQTP…RAVWEPFVML (101 aa).

It belongs to the KHDC1 family. In terms of assembly, component of the subcortical maternal complex (SCMC), at least composed of NLRP5, KHDC3, OOEP, and TLE6. Within the complex, interacts with NLRP5, KHDC3 and TLE6. The SCMC may facilitate translocation of its components between the nuclear and cytoplasmic compartments. Forms a scaffold complex with OOEP/FLOPED, and interacts with BLM and TRIM25 at DNA replication forks. Interacts with PARP1; the interaction is increased following the formation of DNA double-strand breaks. Interacts (via C-terminus) with NUMA1.

Its subcellular location is the cytoplasm. It localises to the cell cortex. The protein localises to the nucleus. It is found in the mitochondrion. The protein resides in the cytoskeleton. Its subcellular location is the microtubule organizing center. It localises to the centrosome. The protein localises to the chromosome. In terms of biological role, component of the subcortical maternal complex (SCMC), a multiprotein complex that plays a key role in early embryonic development. The SCMC complex is a structural constituent of cytoplasmic lattices, which consist in fibrous structures found in the cytoplasm of oocytes and preimplantation embryos. They are required to store maternal proteins critical for embryonic development, such as proteins that control epigenetic reprogramming of the preimplantation embryo, and prevent their degradation or activation. KHDC3 ensures proper spindle assembly by regulating the localization of AURKA via RHOA signaling and of PLK1 via a RHOA-independent process. Required for the localization of MAD2L1 to kinetochores to enable spindle assembly checkpoint function. As part of the OOEP-KHDC3 scaffold, recruits BLM and TRIM25 to DNA replication forks, thereby promoting the ubiquitination of BLM by TRIM25, enhancing BLM retainment at replication forks and therefore promoting stalled replication fork restart. Regulates homologous recombination-mediated DNA repair via recruitment of RAD51 to sites of DNA double-strand breaks, and sustainment of PARP1 activity, which in turn modulates downstream ATM or ATR activation. Activation of ATM or ATR in response to DNA double-strand breaks may be cell-type specific. Its role in DNA double-strand break repair is independent of its role in restarting stalled replication forks. Promotes neural stem cell neurogenesis and neuronal differentiation in the hippocampus. May regulate normal development of learning, memory and anxiety. Capable of binding RNA. The sequence is that of KH domain-containing protein 3 from Rattus norvegicus (Rat).